The chain runs to 492 residues: Ketol-acid reductoisomerase (NADP(+)) (492 aa).

The 195-residue stretch at 14–208 (LDQLGRCRFM…GGHKAGVLES (195 aa)) folds into the KARI N-terminal Rossmann domain. NADP(+)-binding positions include 45–48 (CGAQ), R68, R76, S78, and 108–110 (DKQ). The active site involves H132. Residue G158 coordinates NADP(+). 2 consecutive KARI C-terminal knotted domains span residues 209 to 344 (SFVA…NAPK) and 345 to 485 (YDGK…MTDM). Mg(2+) is bound by residues D217, E221, E389, and E393. Residue S414 coordinates substrate.

This sequence belongs to the ketol-acid reductoisomerase family. It depends on Mg(2+) as a cofactor.

The enzyme catalyses (2R)-2,3-dihydroxy-3-methylbutanoate + NADP(+) = (2S)-2-acetolactate + NADPH + H(+). It catalyses the reaction (2R,3R)-2,3-dihydroxy-3-methylpentanoate + NADP(+) = (S)-2-ethyl-2-hydroxy-3-oxobutanoate + NADPH + H(+). The protein operates within amino-acid biosynthesis; L-isoleucine biosynthesis; L-isoleucine from 2-oxobutanoate: step 2/4. It participates in amino-acid biosynthesis; L-valine biosynthesis; L-valine from pyruvate: step 2/4. In terms of biological role, involved in the biosynthesis of branched-chain amino acids (BCAA). Catalyzes an alkyl-migration followed by a ketol-acid reduction of (S)-2-acetolactate (S2AL) to yield (R)-2,3-dihydroxy-isovalerate. In the isomerase reaction, S2AL is rearranged via a Mg-dependent methyl migration to produce 3-hydroxy-3-methyl-2-ketobutyrate (HMKB). In the reductase reaction, this 2-ketoacid undergoes a metal-dependent reduction by NADPH to yield (R)-2,3-dihydroxy-isovalerate. This chain is Ketol-acid reductoisomerase (NADP(+)), found in Haemophilus influenzae (strain PittEE).